Consider the following 419-residue polypeptide: UPF0242 protein TC_0906 (419 aa).

Belongs to the UPF0242 family.

This Chlamydia muridarum (strain MoPn / Nigg) protein is UPF0242 protein TC_0906.